Here is a 552-residue protein sequence, read N- to C-terminus: Arginine--tRNA ligase (552 aa).

Residues 130–140 carry the 'HIGH' region motif; the sequence is ANPTGPIHLGG.

This sequence belongs to the class-I aminoacyl-tRNA synthetase family. As to quaternary structure, monomer.

It is found in the cytoplasm. The catalysed reaction is tRNA(Arg) + L-arginine + ATP = L-arginyl-tRNA(Arg) + AMP + diphosphate. The chain is Arginine--tRNA ligase from Nocardia farcinica (strain IFM 10152).